A 303-amino-acid polypeptide reads, in one-letter code: MAATPEFGSLRSDDDHWDIVSSVGYTALLVAGWRALHAVGPQPLVRDEYAKYFITASRDPYLMNLLANPGTSLNETAFPRLYGVQTRFFDDFFSSAGDTGIRQAVIVAAGLDSRAYRLKWPNGATVFEIDLPKVLEFKARVLAEQGAIPNAGRSEVAADLRADWPRALKAAGFDPQRSSAWSVEGLLPYLTNDAQSALFTRIGELCAPGSRIAVGALGSRLDRKQLAALEATHPGVNISGDVDFSALTYEPKTDSAQWLAAHGWAVEPVRNTLELQTSYGMTPPDVDVQMDSFMHSQYITATR.

S-adenosyl-L-methionine-binding positions include Asp-130 and Asp-159 to Leu-160.

It belongs to the UPF0677 family.

Its function is as follows. Exhibits S-adenosyl-L-methionine-dependent methyltransferase activity. The protein is Putative S-adenosyl-L-methionine-dependent methyltransferase ML2020 of Mycobacterium leprae (strain TN).